A 92-amino-acid chain; its full sequence is Probable Fe(2+)-trafficking protein (92 aa).

It belongs to the Fe(2+)-trafficking protein family.

Could be a mediator in iron transactions between iron acquisition and iron-requiring processes, such as synthesis and/or repair of Fe-S clusters in biosynthetic enzymes. The polypeptide is Probable Fe(2+)-trafficking protein (Shewanella piezotolerans (strain WP3 / JCM 13877)).